The following is a 601-amino-acid chain: Cdc42-interacting protein 4 (601 aa).

The segment at 1–117 is required for translocation to the plasma membrane in response to insulin, podosome formation and interaction with AKAP9 and microtubules; it reads MDWGTELWDQ…EMKQERKMHF (117 aa). The F-BAR domain maps to 1-264; it reads MDWGTELWDQ…AANAVDPKND (264 aa). Residues 67–259 are a coiled coil; sequence FSQQQSFVQI…EGMKVAANAV (193 aa). Disordered regions lie at residues 280 to 358, 390 to 420, and 478 to 543; these read GDVE…GRDP, DFSH…EVDQ, and NRGD…SPIG. Positions 289–302 are enriched in polar residues; the sequence is QPMNRAPSDSSLGT. Residues 293-537 are interaction with CDC42; that stretch reads RAPSDSSLGT…TEFDEDFEEE (245 aa). Residues 293–601 form an interaction with PDE6G region; the sequence is RAPSDSSLGT…PTSYLRVTLN (309 aa). Residues Ser-296, Ser-298, and Ser-299 each carry the phosphoserine modification. Positions 314 to 329 are enriched in basic residues; sequence GRSRTKRWPFGKKNKP. Residue Ser-335 is modified to Phosphoserine. Over residues 336–346 the composition is skewed to low complexity; it reads PLGGPVPSALP. Ser-351 bears the Phosphoserine mark. Residues 388-481 are a coiled coil; it reads TEDFSHLPPE…ESRVLSNRGD (94 aa). The REM-1 domain maps to 393–470; it reads HLPPEQQRKR…VQKYEAWLAE (78 aa). The span at 407-420 shows a compositional bias: basic and acidic residues; that stretch reads LEERSRELQKEVDQ. The segment at 471–601 is required for interaction with FASLG and localization to lysosomes; the sequence is AESRVLSNRG…PTSYLRVTLN (131 aa). A Phosphoserine modification is found at Ser-482. Residues 487–541 are interaction with DNM2 and WASL; the sequence is ARPPDPPTSAPPDSSSNSASQDTKESSEEPPSEESQDTPIYTEFDEDFEEEPTSP. Residues 497–506 show a composition bias toward low complexity; the sequence is PPDSSSNSAS. Over residues 529–538 the composition is skewed to acidic residues; it reads EFDEDFEEEP. Residues 529-601 are interaction with DNM1 and WASL; it reads EFDEDFEEEP…PTSYLRVTLN (73 aa). Residues 538 to 601 form a required for podosome formation region; sequence PTSPIGHCVA…PTSYLRVTLN (64 aa). One can recognise an SH3 domain in the interval 540-601; the sequence is SPIGHCVAIY…PTSYLRVTLN (62 aa). The interaction with WAS stretch occupies residues 544–601; the sequence is HCVAIYHFEGSSEGTISMAEGEDLSLMEEDKGDGWTRVRRKEGGEGYVPTSYLRVTLN. Residues 546-601 are interaction with ARHGAP17, DAAM1, DIAPH1 and DIAPH2; that stretch reads VAIYHFEGSSEGTISMAEGEDLSLMEEDKGDGWTRVRRKEGGEGYVPTSYLRVTLN.

This sequence belongs to the FNBP1 family. As to quaternary structure, homodimerizes, the dimers can polymerize end-to-end to form filamentous structures. Interacts with AKAP9, ARHGAP17, DAAM1, DIAPH1, DIAPH2, DNM1, FASLG/FASL, GAPVD1, LYN, microtubules, PDE6G, SRC and WAS/WASP. Interacts with the ligand binding domain of the thyroid receptor (TR) in the presence of thyroid hormone. May interact with CTNNB1 and HD/HTT. Interacts specifically with GTP-bound CDC42 and RHOQ. Interacts with DNM2 and WASL. In terms of processing, tyrosine phosphorylated. Also phosphorylated by PKA.

The protein resides in the cytoplasm. It is found in the cytoskeleton. The protein localises to the cell cortex. It localises to the lysosome. Its subcellular location is the golgi apparatus. The protein resides in the cell membrane. It is found in the cell projection. The protein localises to the phagocytic cup. Its function is as follows. Required to coordinate membrane tubulation with reorganization of the actin cytoskeleton during endocytosis. Also acts as a link between CDC42 signaling and regulation of the actin cytoskeleton. Binds to lipids such as phosphatidylinositol 4,5-bisphosphate and phosphatidylserine and promotes membrane invagination and the formation of tubules. Also enhances actin polymerization in the vicinity of membrane tubules by recruiting WASL/N-WASP which in turn activates the Arp2/3 complex. Actin polymerization and dynamin may promote the fission of membrane tubules to form endocytic vesicles. Required for the formation of podosomes, actin-rich adhesion structures specific to monocyte-derived cells. Required for translocation of GLUT4 to the plasma membrane in response to insulin signaling. May be required for the lysosomal retention of FASLG/FASL. The polypeptide is Cdc42-interacting protein 4 (TRIP10) (Pongo abelii (Sumatran orangutan)).